The following is a 105-amino-acid chain: NADH-quinone oxidoreductase subunit K (105 aa).

The next 3 helical transmembrane spans lie at 7–27 (IGVN…MFAV), 34–54 (IVIL…FLTF), and 66–86 (FSLF…AIVI).

It belongs to the complex I subunit 4L family. In terms of assembly, NDH-1 is composed of 14 different subunits. Subunits NuoA, H, J, K, L, M, N constitute the membrane sector of the complex.

The protein resides in the cell inner membrane. The catalysed reaction is a quinone + NADH + 5 H(+)(in) = a quinol + NAD(+) + 4 H(+)(out). In terms of biological role, NDH-1 shuttles electrons from NADH, via FMN and iron-sulfur (Fe-S) centers, to quinones in the respiratory chain. The immediate electron acceptor for the enzyme in this species is believed to be a menaquinone. Couples the redox reaction to proton translocation (for every two electrons transferred, four hydrogen ions are translocated across the cytoplasmic membrane), and thus conserves the redox energy in a proton gradient. This chain is NADH-quinone oxidoreductase subunit K, found in Chlorobaculum parvum (strain DSM 263 / NCIMB 8327) (Chlorobium vibrioforme subsp. thiosulfatophilum).